The sequence spans 204 residues: RNA-free ribonuclease P (204 aa).

Belongs to the HARP family.

The catalysed reaction is Endonucleolytic cleavage of RNA, removing 5'-extranucleotides from tRNA precursor.. Its function is as follows. RNA-free RNase P that catalyzes the removal of the 5'-leader sequence from pre-tRNA to produce the mature 5'-terminus. This chain is RNA-free ribonuclease P, found in Pyrococcus abyssi (strain GE5 / Orsay).